Consider the following 393-residue polypeptide: Stearoyl-[acyl-carrier-protein] 9-desaturase, chloroplastic (393 aa).

The N-terminal 30 residues, 1-30 (MALNFNSPTFQSIKTTRRPCSPLRSPRVFM), are a transit peptide targeting the chloroplast. Residues E135, E173, H176, E226, E259, and H262 each contribute to the Fe cation site.

Belongs to the fatty acid desaturase type 2 family. Homodimer. Fe(2+) serves as cofactor.

Its subcellular location is the plastid. It localises to the chloroplast. The enzyme catalyses octadecanoyl-[ACP] + 2 reduced [2Fe-2S]-[ferredoxin] + O2 + 2 H(+) = (9Z)-octadecenoyl-[ACP] + 2 oxidized [2Fe-2S]-[ferredoxin] + 2 H2O. The protein operates within lipid metabolism; fatty acid metabolism. Its function is as follows. Converts stearoyl-ACP to oleoyl-ACP by introduction of a cis double bond between carbons 9 and 10 of the acyl chain. The protein is Stearoyl-[acyl-carrier-protein] 9-desaturase, chloroplastic of Solanum commersonii (Commerson's wild potato).